The primary structure comprises 595 residues: NADH-quinone oxidoreductase subunit C/D (595 aa).

An NADH dehydrogenase I subunit C region spans residues 1–185 (MTDLTAQAAC…DPFELTKAKQ (185 aa)). Positions 209–595 (DFMFLNLGPN…IDFVMSDVDR (387 aa)) are NADH dehydrogenase I subunit D.

The protein in the N-terminal section; belongs to the complex I 30 kDa subunit family. In the C-terminal section; belongs to the complex I 49 kDa subunit family. As to quaternary structure, NDH-1 is composed of 13 different subunits. Subunits NuoB, CD, E, F, and G constitute the peripheral sector of the complex.

It is found in the cell inner membrane. The catalysed reaction is a quinone + NADH + 5 H(+)(in) = a quinol + NAD(+) + 4 H(+)(out). Its function is as follows. NDH-1 shuttles electrons from NADH, via FMN and iron-sulfur (Fe-S) centers, to quinones in the respiratory chain. The immediate electron acceptor for the enzyme in this species is believed to be ubiquinone. Couples the redox reaction to proton translocation (for every two electrons transferred, four hydrogen ions are translocated across the cytoplasmic membrane), and thus conserves the redox energy in a proton gradient. The chain is NADH-quinone oxidoreductase subunit C/D from Enterobacter sp. (strain 638).